The following is a 498-amino-acid chain: Cytochrome P450 monooxygenase ltmP (498 aa).

Positions 1–21 (MLMLHAVPVGICLLLWYVVYG) are cleaved as a signal peptide. Asparagine 420 carries N-linked (GlcNAc...) asparagine glycosylation. Cysteine 435 provides a ligand contact to heme.

Belongs to the cytochrome P450 family. Requires heme as cofactor.

Its pathway is secondary metabolite biosynthesis. Functionally, cytochrome P450 monooxygenase; part of the gene clusters that mediates the biosynthesis of lolitrems, indole-diterpene mycotoxins that are potent tremorgens in mammals, and are synthesized by clavicipitaceous fungal endophytes in association with their grass hosts. The geranylgeranyl diphosphate (GGPP) synthase ltmG is proposed to catalyze the first step in lolitrem biosynthesis. LtmG catalyzes a series of iterative condensations of isopentenyl diphosphate (IPP) with dimethylallyl diphosphate (DMAPP), geranyl diphosphate (GPP), and farnesyl diphosphate (FPP), to form GGPP. GGPP then condenses with indole-3-glycerol phosphate to form 3-geranylgeranylindole, an acyclic intermediate, to be incorporated into paxilline. Either ltmG or ltmC could be responsible for this step, as both are putative prenyl transferases. The FAD-dependent monooxygenase ltmM then catalyzes the epoxidation of the two terminal alkenes of the geranylgeranyl moiety, which is subsequently cyclized by ltmB, to paspaline. The cytochrome P450 monooxygenases ltmQ and ltmP can sequentially oxidize paspaline to terpendole E and terpendole F. Alternatively, ltmP converts paspaline to an intermediate which is oxidized by ltmQ to terpendole F. LtmF, ltmK, ltmE and ltmJ appear to be unique to the epichloe endophytes. The prenyltransferase ltmF is involved in the 27-hydroxyl-O-prenylation. The cytochrome P450 monooxygenase ltmK is required for the oxidative acetal ring formation. The multi-functional prenyltransferase ltmE is required for C20- and C21-prenylations of the indole ring of paspalanes and acts together with the cytochrome P450 monooxygenase ltmJ to yield lolitremanes by multiple oxidations and ring closures. The stereoisomer pairs of lolitriol and lolitrem N or lolitrem B and lolitrem F may be attributed to variations in the way in which ring closure can occur under the action of ltmJ. While the major product of this pathway is lolitrem B, the prenyl transferases and cytochrome P450 monooxygenases identified in this pathway have a remarkable versatility in their regio- and stereo-specificities to generate a diverse range of metabolites that are products of a metabolic grid rather than a linear pathway. This is Cytochrome P450 monooxygenase ltmP from Epichloe festucae var. lolii (Neotyphodium lolii).